The primary structure comprises 371 residues: Poly(rC)-binding protein 3 (371 aa).

3 consecutive KH domains span residues T45 to G95, P129 to G182, and A293 to I357.

As to expression, widely expressed, with highest levels in testis and fat tissues and lowest in heart.

The protein localises to the cytoplasm. Its function is as follows. Single-stranded nucleic acid binding protein that binds preferentially to oligo dC. The protein is Poly(rC)-binding protein 3 (Pcbp3) of Mus musculus (Mouse).